Reading from the N-terminus, the 99-residue chain is Ferredoxin (99 aa).

Residues 4 to 96 (YKIHLLCEEE…DCTISTHVEQ (93 aa)) enclose the 2Fe-2S ferredoxin-type domain. [2Fe-2S] cluster contacts are provided by Cys-42, Cys-47, Cys-50, and Cys-80.

The protein belongs to the 2Fe2S plant-type ferredoxin family. Forms a complex with heterodimeric ferredoxin-thioredoxin reductase (FTR) and thioredoxin. The cofactor is [2Fe-2S] cluster.

Its subcellular location is the plastid. It localises to the chloroplast. Its function is as follows. Ferredoxins are iron-sulfur proteins that transfer electrons in a wide variety of metabolic reactions. The chain is Ferredoxin (petF) from Pyropia yezoensis (Susabi-nori).